Reading from the N-terminus, the 1373-residue chain is DNA-directed RNA polymerase subunit beta'' (1373 aa).

Residues C224, C296, C303, and C306 each coordinate Zn(2+).

Belongs to the RNA polymerase beta' chain family. RpoC2 subfamily. In plastids the minimal PEP RNA polymerase catalytic core is composed of four subunits: alpha, beta, beta', and beta''. When a (nuclear-encoded) sigma factor is associated with the core the holoenzyme is formed, which can initiate transcription. It depends on Zn(2+) as a cofactor.

It localises to the plastid. The protein localises to the chloroplast. It catalyses the reaction RNA(n) + a ribonucleoside 5'-triphosphate = RNA(n+1) + diphosphate. DNA-dependent RNA polymerase catalyzes the transcription of DNA into RNA using the four ribonucleoside triphosphates as substrates. This Amborella trichopoda protein is DNA-directed RNA polymerase subunit beta''.